Reading from the N-terminus, the 201-residue chain is 3-isopropylmalate dehydratase small subunit (201 aa).

Belongs to the LeuD family. LeuD type 1 subfamily. As to quaternary structure, heterodimer of LeuC and LeuD.

The enzyme catalyses (2R,3S)-3-isopropylmalate = (2S)-2-isopropylmalate. It participates in amino-acid biosynthesis; L-leucine biosynthesis; L-leucine from 3-methyl-2-oxobutanoate: step 2/4. Catalyzes the isomerization between 2-isopropylmalate and 3-isopropylmalate, via the formation of 2-isopropylmaleate. This is 3-isopropylmalate dehydratase small subunit from Shewanella sp. (strain ANA-3).